A 215-amino-acid polypeptide reads, in one-letter code: Protein FAM27D1 (215 aa).

The interval 74-172 (QPKTHTHTGM…RGTQADLSSR (99 aa)) is disordered. The span at 87-108 (THRERERNTQRLRDRERRENGR) shows a compositional bias: basic and acidic residues. Residues 109–122 (HTHRHTHTLTHTHT) show a composition bias toward basic residues. Basic and acidic residues-rich tracts occupy residues 123–139 (HRDT…ETHT) and 149–162 (SAHD…REQP). A compositionally biased stretch (polar residues) spans 163–172 (RGTQADLSSR).

The protein belongs to the FAM27 family.

The sequence is that of Protein FAM27D1 (FAM27D1) from Homo sapiens (Human).